A 1871-amino-acid chain; its full sequence is Girdin (1871 aa).

The Calponin-homology (CH) domain maps to 12 to 132; sequence QFMTSPLVTW…KLLLLLLGCA (121 aa). Residues 196–425 are a coiled coil; it reads HLKRLIDERD…EMAQKQSMDE (230 aa). Phosphoserine is present on residues Ser-233, Ser-237, and Ser-449. Residues 458 to 1385 adopt a coiled-coil conformation; sequence TSSRLLKLEM…KIMDQYKFYD (928 aa). Disordered stretches follow at residues 816–842 and 1010–1035; these read ENKS…KRLR and RQDE…RESQ. Ser-1020 carries the phosphoserine modification. Residues 1026–1035 are compositionally biased toward basic and acidic residues; sequence EDNKWERESQ. Ser-1387 carries the phosphoserine modification. A phosphoinositide-binding region spans residues 1390-1408; the sequence is RRRGNWITLKMRKLIKSKK. The segment covering 1407-1416 has biased composition (basic and acidic residues); the sequence is KKDINRERQK. 2 disordered regions span residues 1407–1459 and 1559–1601; these read KKDI…LGTK and TTSF…SNNN. Phosphoserine; by PKB/AKT1 is present on Ser-1417. Composition is skewed to polar residues over residues 1417 to 1430, 1445 to 1459, and 1559 to 1578; these read SLTL…SSEG, VGSN…LGTK, and TTSF…STGS. Thr-1421 carries the post-translational modification Phosphothreonine. The GBA signature appears at 1672–1702; sequence KTGSPGSEVVTLQQFLEESNKLTSVQIKSSS. At Thr-1673 the chain carries Phosphothreonine. Residue Ser-1675 is modified to Phosphoserine. At Ser-1690 the chain carries Phosphoserine; by PKC/PRKCQ. The tract at residues 1713–1823 is SH2-like; required for interaction with growth factor receptors; it reads SLSVSSDFLG…GTTRRTSIHD (111 aa). Ser-1717 bears the Phosphoserine mark. The disordered stretch occupies residues 1736–1871; that stretch reads SGKTPGDFYD…KSRSREQQSS (136 aa). Over residues 1743 to 1763 the composition is skewed to basic and acidic residues; the sequence is FYDRRTTKPEFLRPGPRKTED. Residues Tyr-1765 and Tyr-1799 each carry the phosphotyrosine modification. Polar residues-rich tracts occupy residues 1787-1799 and 1807-1818; these read SSLS…SNPY and SVISTAEGTTRR. Phosphoserine is present on residues Ser-1820 and Ser-1837. Over residues 1820-1830 the composition is skewed to basic and acidic residues; that stretch reads SIHDFLTKDSR. A compositionally biased stretch (low complexity) spans 1838 to 1851; that stretch reads PPAAADSNTTAASN. Over residues 1854–1871 the composition is skewed to basic and acidic residues; that stretch reads KVQESRNSKSRSREQQSS.

It belongs to the CCDC88 family. Homodimer. Interacts (via GBA motif) with guanine nucleotide-binding protein G(i) alpha subunits GNAI1, GNAI2 and GNAI3. Also interacts (via GNA motif) with guanine nucleotide-binding protein G(s) alpha subunit GNAS. Interaction with G(i) alpha subunits occurs before interaction with GNAS and is regulated by phosphorylation; phosphorylation at Ser-1675 enhances binding to G(i) alpha subunits while phosphorylation at Ser-1690 abolishes G(i) alpha subunit binding, promoting binding to GNAS. Interacts (via C-terminal SH2-like region) with growth factor receptors EGFR, INSR and KDR/VEGFR2 (via their autophosphorylated cytoplasmic tails). Forms a complex with EGFR and GNAI3 which leads to enhanced EGFR signaling and triggering of cell migration; ligand stimulation is required for recruitment of GNAI3 to the complex. Interacts (tyrosine-phosphorylated form) with phosphatidylinositol 3-kinase (PI3K) regulatory subunit PIK3R1/p85a (via SH2 domains); the interaction enables recruitment of PIK3R1 to the EGFR receptor, enhancing PI3K activity and cell migration. Interacts with serine/threonine-protein kinase PRKCQ; the interaction leads to phosphorylation of CCDC88A and inhibition of its guanine nucleotide exchange factor activity. Interacts (via C-terminus) with DISC1; the interaction is direct. Interacts with AKT proteins; the interaction is inhibited in the presence of DISC1. Interacts with AKT1/PKB (via C-terminus). The non-phosphorylated form interacts with phosphatidylinositol 4-phosphate [PI(4)P] and weakly with phosphatidylinositol 3-phosphate [PI(3)P]. Interacts with microtubules. Interacts with actin. In terms of processing, phosphorylation is induced by epidermal growth factor (EGF) in a phosphoinositide 3-kinase (PI3K)-dependent manner. Phosphorylation by AKT1/PKB is necessary for delocalization from the cell membrane and for cell migration. Phosphorylated on tyrosine residues which promotes binding to phosphatidylinositol 3-kinase (PI3K) regulatory subunit PIK3R1/p85a and enhances PI3K activity. Tyrosine-phosphorylated by both receptor and non-receptor tyrosine kinases in vitro. Tyrosine phosphorylation is required for AKT1-dependent phosphorylation of Ser-1417. Phosphorylation at Ser-1690 by PRKCQ disrupts interaction with GNAI3 and inhibits guanine nucleotide exchange factor activity. Expressed ubiquitously.

Its subcellular location is the cell membrane. The protein resides in the cytoplasm. The protein localises to the cytosol. It is found in the cytoplasmic vesicle. It localises to the cell projection. Its subcellular location is the lamellipodium. The protein resides in the cytoskeleton. The protein localises to the cilium basal body. It is found in the microtubule organizing center. It localises to the centrosome. Its subcellular location is the centriole. In terms of biological role, bifunctional modulator of guanine nucleotide-binding proteins (G proteins). Acts as a non-receptor guanine nucleotide exchange factor which binds to and activates guanine nucleotide-binding protein G(i) alpha subunits. Also acts as a guanine nucleotide dissociation inhibitor for guanine nucleotide-binding protein G(s) subunit alpha GNAS. Essential for cell migration. Interacts in complex with G(i) alpha subunits with the EGFR receptor, retaining EGFR at the cell membrane following ligand stimulation and promoting EGFR signaling which triggers cell migration. Binding to Gi-alpha subunits displaces the beta and gamma subunits from the heterotrimeric G-protein complex which enhances phosphoinositide 3-kinase (PI3K)-dependent phosphorylation and kinase activity of AKT1/PKB. Phosphorylation of AKT1/PKB induces the phosphorylation of downstream effectors GSK3 and FOXO1/FKHR, and regulates DNA replication and cell proliferation. Binds in its tyrosine-phosphorylated form to the phosphatidylinositol 3-kinase (PI3K) regulatory subunit PIK3R1 which enables recruitment of PIK3R1 to the EGFR receptor, enhancing PI3K activity and cell migration. Plays a role as a key modulator of the AKT-mTOR signaling pathway, controlling the tempo of the process of newborn neuron integration during adult neurogenesis, including correct neuron positioning, dendritic development and synapse formation. Inhibition of G(s) subunit alpha GNAS leads to reduced cellular levels of cAMP and suppression of cell proliferation. Essential for the integrity of the actin cytoskeleton. Required for formation of actin stress fibers and lamellipodia. May be involved in membrane sorting in the early endosome. Plays a role in ciliogenesis and cilium morphology and positioning and this may partly be through regulation of the localization of scaffolding protein CROCC/Rootletin. The protein is Girdin (CCDC88A) of Homo sapiens (Human).